The sequence spans 575 residues: Alpha-humulene synthase (575 aa).

Mg(2+) is bound by residues Asp-325, Asp-329, Asp-469, and Glu-477. Residues 325-329 carry the DDXXD motif motif; it reads DDLYD.

It belongs to the terpene synthase family. Tpsa subfamily. Mg(2+) is required as a cofactor. The cofactor is Mn(2+).

The enzyme catalyses (2E,6E)-farnesyl diphosphate = alpha-humulene + diphosphate. It functions in the pathway sesquiterpene biosynthesis. Its pathway is terpene metabolism; oleoresin biosynthesis. Functionally, terpene synthase (TPS) involved in the biosynthesis of sesquiterpene natural products included in conifer oleoresin secretions and volatile emissions; these compounds contribute to biotic and abiotic stress defense against herbivores and pathogens. Catalyzes the conversion of (2E,6E)-farnesyl diphosphate (FPP) to (1E,4E,8E)-alpha-humulene. In Picea glauca (White spruce), this protein is Alpha-humulene synthase.